A 203-amino-acid chain; its full sequence is Glycerol-3-phosphate acyltransferase (203 aa).

4 helical membrane passes run 6-26 (LTLLMIVAAYLAGSVSSAVLV), 82-102 (AISLGLIAIAACLGHIYPIFF), 118-138 (APIGDDLAICLMASWVVLVLI), and 141-161 (YSSLAAIITALLAPLYTWWLD).

The protein belongs to the PlsY family. In terms of assembly, probably interacts with PlsX.

Its subcellular location is the cell inner membrane. The enzyme catalyses an acyl phosphate + sn-glycerol 3-phosphate = a 1-acyl-sn-glycero-3-phosphate + phosphate. The protein operates within lipid metabolism; phospholipid metabolism. Catalyzes the transfer of an acyl group from acyl-phosphate (acyl-PO(4)) to glycerol-3-phosphate (G3P) to form lysophosphatidic acid (LPA). This enzyme utilizes acyl-phosphate as fatty acyl donor, but not acyl-CoA or acyl-ACP. This chain is Glycerol-3-phosphate acyltransferase, found in Shewanella sp. (strain MR-4).